Consider the following 1009-residue polypeptide: MSGVSEPLSRVKVGTLRPPEGPPEPMVVVPVDVEKEDVRILKVCFYSNSFNPGKNFKLVKCTVQTEIQEIITSILLSGRIGPNIQLAECYGLRLKHMKSDEIHWLHPQMTVGEVQDKYECLHVEAEWRYDLQIRYLPEDFMESLKEDRTTLLYFYQQLRNDYMQRYASKVSEGMALQLGCLELRRFFKDMPHNALDKKSNFELLEKEVGLDLFFPKQMQENLKPKQFRKMIQQTFQQYASLREEECVMKFFNTLAGFANIDQETYRCELIQGWNITVDLVIGPKGIRQLTSQDTKPTCLAEFKQIRSIRCLPLEETQAVLQLGIEGAPQSLSIKTSSLAEAENMADLIDGYCRLQGEHKGSLIIHAKKDGEKRNSLPQIPTLNLESRRSHLSESCSIESDIYAEIPDETLRRPGGPQYGVAREDVVLNRILGEGFFGEVYEGVYTNHKGEKINVAVKTCKKDCTLDNKEKFMSEAVIMKNLDHPHIVKLIGIIEEEPTWIVMELYPYGELGHYLERNKNSLKVPTLVLYALQICKAMAYLESINCVHRDIAVRNILVASPECVKLGDFGLSRYIEDEDYYKASVTRLPIKWMSPESINFRRFTTASDVWMFAVCMWEILSFGKQPFFWLENKDVIGVLEKGDRLPKPELCPPVLYTLMTRCWDYDPSDRPRFTELVCSLSDIYQMERDIAIEQERNARYRPPKILEPTAFQEPPPKPSRPKYKHPPQTNLLAPKLQFQVPEGLCASSPTLTSPMEYPSPVNSLHTPPLHRHNVFKRHSMREEDFIRPSSREEAQQLWEAEKIKMRQVLDRQQKQMVEDSQWLRREERCLDPMVYMNDKSPLTPEKEAGYTEFTGPPQKPPRLGAQSIQPTANLDRTDDLVYHNVMTLVEAVLELKNKLSQLPPEEYVVVVKNVGLNLRKLIGSVDDLLPSLPASSRTEIEGTQKLLNKDLAELINKMRLAQQNAVTSLSEDCKRQMLTASHTLAVDAKNLLDAVDQAKVVANLAHPPAE.

An FERM domain is found at 39 to 359; that stretch reads RILKVCFYSN…GYCRLQGEHK (321 aa). Residues S361, S375, and S399 each carry the phosphoserine modification. Position 402 is a phosphotyrosine; by autocatalysis (Y402). The Protein kinase domain maps to 425–683; it reads VVLNRILGEG…ELVCSLSDIY (259 aa). ATP is bound by residues 431–439, K457, and 503–509; these read LGEGFFGEV and ELYPYGE. Catalysis depends on D549, which acts as the Proton acceptor. Phosphotyrosine is present on residues Y579, Y580, and Y722. The disordered stretch occupies residues 702–725; that stretch reads PKILEPTAFQEPPPKPSRPKYKHP. Position 762 is a phosphoserine (S762). A Phosphothreonine modification is found at T765. An interaction with TGFB1I1 region spans residues 801-1009; that stretch reads KIKMRQVLDR…VANLAHPPAE (209 aa). Y834 carries the phosphotyrosine modification. S839 carries the post-translational modification Phosphoserine. Position 842 is a phosphothreonine (T842). Y849 bears the Phosphotyrosine mark. S866 carries the phosphoserine modification. The segment at 868–1009 is focal adhesion targeting (FAT); sequence QPTANLDRTD…VANLAHPPAE (142 aa). A Phosphotyrosine modification is found at Y881.

Belongs to the protein kinase superfamily. Tyr protein kinase family. FAK subfamily. As to quaternary structure, homodimer, or homooligomer. Interacts with NPHP1, ASAP1, ASAP2, ARHGAP26, SKAP2 and TGFB1I1. The Tyr-402 phosphorylated form interacts with SRC (via SH2 domain) and SRC family members. Forms a signaling complex with EPHA1, LCK and phosphatidylinositol 3-kinase; upon activation by EFNA1. Interacts with GRB2 (via SH2 domain). Interacts with P53/TP53 and MDM2. Interacts with MYLK. Interacts with BCAR1. Interacts with RB1CC1. Interacts with RHOU. Interacts with VAV1. Interacts with PDPK1. Interacts with LPXN and PTPN12. Interacts with SIRPA and SH2D3C. Interacts (hypophosphorylated) with PXN. Interacts with ARHGAP10. Interacts with KCNA2. Post-translationally, phosphorylated on tyrosine residues in response to various stimuli that elevate the intracellular calcium concentration; this activation is indirect and may be mediated by production of reactive oxygen species (ROS). Tyr-402 is the major autophosphorylation site, but other kinases can also phosphorylate Tyr-402. Autophosphorylation occurs in trans, i.e. one subunit of the dimeric receptor phosphorylates tyrosine residues on the other subunit. Phosphorylation at Tyr-402 promotes interaction with SRC and SRC family members, leading to phosphorylation at Tyr-579; Tyr-580 and Tyr-881. Phosphorylation at Tyr-881 is important for interaction with GRB2. Phosphorylated on tyrosine residues upon activation of FGR and PKC. Recruitment by NPHP1 to cell matrix adhesions initiates Tyr-402 phosphorylation. In monocytes, adherence to substrata is required for tyrosine phosphorylation and kinase activation. Angiotensin II, thapsigargin and L-alpha-lysophosphatidic acid (LPA) also induce autophosphorylation and increase kinase activity. Phosphorylation by MYLK promotes ITGB2 activation and is thus essential to trigger neutrophil transmigration during lung injury. Dephosphorylated by PTPN12. Highly expressed in pulmonary vein endothelial cells, lung and brain (at protein level). Isoform 1 is expressed at high levels in the brain (hippocampus, cerebral cortex and olfactory bulb) and poorly in the spleen and other tissues, whereas isoforms 2 and 3 are expressed in the spleen and brain (highest in cerebellum).

The protein resides in the cytoplasm. It is found in the perinuclear region. Its subcellular location is the cell membrane. It localises to the cell projection. The protein localises to the lamellipodium. The protein resides in the cell cortex. It is found in the nucleus. Its subcellular location is the cell junction. It localises to the focal adhesion. It catalyses the reaction L-tyrosyl-[protein] + ATP = O-phospho-L-tyrosyl-[protein] + ADP + H(+). Activated in response to stimuli that lead to increased intracellular Ca(2+) levels; this activation is indirect and may be mediated by calcium-mediated production of reactive oxygen species (ROS). Activated by autophosphorylation at Tyr-402; this creates a binding site for SRC family kinases and leads to phosphorylation at additional tyrosine residues. Phosphorylation at Tyr-402, Tyr-579 and Tyr-580 is required for optimal kinase activity. Functionally, non-receptor protein-tyrosine kinase that regulates reorganization of the actin cytoskeleton, cell polarization, cell migration, adhesion, spreading and bone remodeling. Plays a role in the regulation of the humoral immune response, and is required for normal levels of marginal B-cells in the spleen and normal migration of splenic B-cells. Required for normal macrophage polarization and migration towards sites of inflammation. Regulates cytoskeleton rearrangement and cell spreading in T-cells, and contributes to the regulation of T-cell responses. Promotes osteoclastic bone resorption; this requires both PTK2B/PYK2 and SRC. May inhibit differentiation and activity of osteoprogenitor cells. Functions in signaling downstream of integrin and collagen receptors, immune receptors, G-protein coupled receptors (GPCR), cytokine, chemokine and growth factor receptors, and mediates responses to cellular stress. Forms multisubunit signaling complexes with SRC and SRC family members upon activation; this leads to the phosphorylation of additional tyrosine residues, creating binding sites for scaffold proteins, effectors and substrates. Regulates numerous signaling pathways. Promotes activation of phosphatidylinositol 3-kinase and of the AKT1 signaling cascade. Promotes activation of NOS3. Regulates production of the cellular messenger cGMP. Promotes activation of the MAP kinase signaling cascade, including activation of MAPK1/ERK2, MAPK3/ERK1 and MAPK8/JNK1. Promotes activation of Rho family GTPases, such as RHOA and RAC1. Recruits the ubiquitin ligase MDM2 to P53/TP53 in the nucleus, and thereby regulates P53/TP53 activity, P53/TP53 ubiquitination and proteasomal degradation. Acts as a scaffold, binding to both PDPK1 and SRC, thereby allowing SRC to phosphorylate PDPK1 at 'Tyr-9, 'Tyr-373', and 'Tyr-376'. Promotes phosphorylation of NMDA receptors by SRC family members, and thereby contributes to the regulation of NMDA receptor ion channel activity and intracellular Ca(2+) levels. May also regulate potassium ion transport by phosphorylation of potassium channel subunits. Phosphorylates SRC; this increases SRC kinase activity. Phosphorylates ASAP1, NPHP1, KCNA2 and SHC1. Promotes phosphorylation of ASAP2, RHOU and PXN; this requires both SRC and PTK2/PYK2. The polypeptide is Protein-tyrosine kinase 2-beta (Ptk2b) (Rattus norvegicus (Rat)).